The following is a 341-amino-acid chain: tRNA N6-adenosine threonylcarbamoyltransferase (341 aa).

His-113 and His-117 together coordinate Fe cation. Substrate contacts are provided by residues 141–145 (LVSGG), Asp-174, Gly-187, and Asn-282. Asp-310 contributes to the Fe cation binding site.

This sequence belongs to the KAE1 / TsaD family. Fe(2+) serves as cofactor.

Its subcellular location is the cytoplasm. It catalyses the reaction L-threonylcarbamoyladenylate + adenosine(37) in tRNA = N(6)-L-threonylcarbamoyladenosine(37) in tRNA + AMP + H(+). Required for the formation of a threonylcarbamoyl group on adenosine at position 37 (t(6)A37) in tRNAs that read codons beginning with adenine. Is involved in the transfer of the threonylcarbamoyl moiety of threonylcarbamoyl-AMP (TC-AMP) to the N6 group of A37, together with TsaE and TsaB. TsaD likely plays a direct catalytic role in this reaction. In Porphyromonas gingivalis (strain ATCC BAA-308 / W83), this protein is tRNA N6-adenosine threonylcarbamoyltransferase.